The sequence spans 477 residues: Bifunctional protein HldE (477 aa).

The segment at 1 to 321 (MKILKSFTPR…EYEASLHKST (321 aa)) is ribokinase. An ATP-binding site is contributed by 198–201 (NKKE). Residue D266 is part of the active site. The tract at residues 348-477 (FTNGCFDILH…IQKIKGDLHV (130 aa)) is cytidylyltransferase.

In the N-terminal section; belongs to the carbohydrate kinase PfkB family. This sequence in the C-terminal section; belongs to the cytidylyltransferase family. As to quaternary structure, homodimer.

It carries out the reaction D-glycero-beta-D-manno-heptose 7-phosphate + ATP = D-glycero-beta-D-manno-heptose 1,7-bisphosphate + ADP + H(+). The enzyme catalyses D-glycero-beta-D-manno-heptose 1-phosphate + ATP + H(+) = ADP-D-glycero-beta-D-manno-heptose + diphosphate. It functions in the pathway nucleotide-sugar biosynthesis; ADP-L-glycero-beta-D-manno-heptose biosynthesis; ADP-L-glycero-beta-D-manno-heptose from D-glycero-beta-D-manno-heptose 7-phosphate: step 1/4. It participates in nucleotide-sugar biosynthesis; ADP-L-glycero-beta-D-manno-heptose biosynthesis; ADP-L-glycero-beta-D-manno-heptose from D-glycero-beta-D-manno-heptose 7-phosphate: step 3/4. Its function is as follows. Catalyzes the phosphorylation of D-glycero-D-manno-heptose 7-phosphate at the C-1 position to selectively form D-glycero-beta-D-manno-heptose-1,7-bisphosphate. Catalyzes the ADP transfer from ATP to D-glycero-beta-D-manno-heptose 1-phosphate, yielding ADP-D-glycero-beta-D-manno-heptose. This chain is Bifunctional protein HldE, found in Sulfurimonas denitrificans (strain ATCC 33889 / DSM 1251) (Thiomicrospira denitrificans (strain ATCC 33889 / DSM 1251)).